A 466-amino-acid polypeptide reads, in one-letter code: MTQAAAPQPWSDRFETALHPAIVVFNASIGFDLALIEYDLTGSQAHAQMLAEQDIISREEGEAIVAGLEQIRSEYRTGQFQPGLDAEDVHFAVERRLTELLGDVGKKLHTARSRNDQVGTDTRLYLRDRVDHIRQQLRDYQRVLLSQAEQHLETLIPGYTHLQRAQPLSLAHHLHAYLEMAERDWERLGDLRKRLNTSPLGAGALAGTTFPIDRQRTAALLGFERIYANSLDAVSDRDSLVEFLAAASLIMVHLSRLAEEVILWASEEFRFVRLSDRCATGSSITPQKKNPDVPELVRGKTGRVFGHLQALLVVLKGLPLAYNKDLQEDKEGLFDAVQTVESCLEAMTILFAEGLSFQPDRLAAAVEADFSNATDVADYLAARGVPFREAYNLVGRVVRTCLEQGKLLKDLSLAEWQALHPQFEADIYTAIAPQQVVAARNSLGGTGFEQVRSALASVRQRLEATC.

This sequence belongs to the lyase 1 family. Argininosuccinate lyase subfamily.

The protein localises to the cytoplasm. The catalysed reaction is 2-(N(omega)-L-arginino)succinate = fumarate + L-arginine. Its pathway is amino-acid biosynthesis; L-arginine biosynthesis; L-arginine from L-ornithine and carbamoyl phosphate: step 3/3. The sequence is that of Argininosuccinate lyase from Synechococcus sp. (strain ATCC 27144 / PCC 6301 / SAUG 1402/1) (Anacystis nidulans).